The sequence spans 103 residues: Regulator of rDNA transcription protein 1 (103 aa).

2 helical membrane-spanning segments follow: residues 9–33 (FLPS…WVLV) and 40–57 (VAFI…YTFF).

The protein localises to the membrane. In terms of biological role, identified in a screen for mutants with decreased levels of rDNA transcription. The protein is Regulator of rDNA transcription protein 1 (RRT1) of Saccharomyces cerevisiae (strain ATCC 204508 / S288c) (Baker's yeast).